Here is a 341-residue protein sequence, read N- to C-terminus: Limbic system-associated membrane protein (341 aa).

A signal peptide spans 1–28 (MVGRVQPDRKQLPLVLLRLLCLLPTGLP). 3 consecutive Ig-like domains span residues 29 to 122 (VRSV…PKTS), 132 to 214 (PKIS…VKVT), and 219 to 304 (PTIT…ASLV). Residues Asn-40 and Asn-66 are each glycosylated (N-linked (GlcNAc...) asparagine). Cysteines 53 and 111 form a disulfide. A Phosphotyrosine modification is found at Tyr-94. Asn-136 and Asn-148 each carry an N-linked (GlcNAc...) asparagine glycan. Disulfide bonds link Cys-153-Cys-197 and Cys-239-Cys-290. 3 N-linked (GlcNAc...) asparagine glycosylation sites follow: Asn-279, Asn-287, and Asn-300.

Belongs to the immunoglobulin superfamily. IgLON family.

It is found in the cell membrane. In terms of biological role, mediates selective neuronal growth and axon targeting. Contributes to the guidance of developing axons and remodeling of mature circuits in the limbic system. Essential for normal growth of the hippocampal mossy fiber projection. This chain is Limbic system-associated membrane protein (Lsamp), found in Mus musculus (Mouse).